A 281-amino-acid chain; its full sequence is F-actin-capping protein subunit alpha (281 aa).

The protein belongs to the F-actin-capping protein alpha subunit family. As to quaternary structure, component of the F-actin capping complex, composed of a heterodimer of an alpha and a beta subunit.

It localises to the cytoplasm. The protein resides in the cytoskeleton. In terms of biological role, F-actin-capping proteins bind in a Ca(2+)-independent manner to the fast growing ends of actin filaments (barbed end) thereby blocking the exchange of subunits at these ends. Unlike other capping proteins (such as gelsolin and severin), these proteins do not sever actin filaments. This is F-actin-capping protein subunit alpha (acpB) from Dictyostelium discoideum (Social amoeba).